Consider the following 141-residue polypeptide: Large ribosomal subunit protein uL11 (141 aa).

It belongs to the universal ribosomal protein uL11 family. Part of the ribosomal stalk of the 50S ribosomal subunit. Interacts with L10 and the large rRNA to form the base of the stalk. L10 forms an elongated spine to which L12 dimers bind in a sequential fashion forming a multimeric L10(L12)X complex. In terms of processing, one or more lysine residues are methylated.

Functionally, forms part of the ribosomal stalk which helps the ribosome interact with GTP-bound translation factors. The polypeptide is Large ribosomal subunit protein uL11 (Bacillus cereus (strain ATCC 10987 / NRS 248)).